We begin with the raw amino-acid sequence, 293 residues long: Probable chromosome 2-partitioning protein ParB (293 aa).

It belongs to the ParB family.

Involved in chromosome partition. Localize to both poles of the predivisional cell following completion of DNA replication. Binds to the DNA origin of replication. The protein is Probable chromosome 2-partitioning protein ParB (parB2) of Deinococcus radiodurans (strain ATCC 13939 / DSM 20539 / JCM 16871 / CCUG 27074 / LMG 4051 / NBRC 15346 / NCIMB 9279 / VKM B-1422 / R1).